The sequence spans 213 residues: Transcription antitermination protein NusB (213 aa).

Belongs to the NusB family.

Functionally, involved in transcription antitermination. Required for transcription of ribosomal RNA (rRNA) genes. Binds specifically to the boxA antiterminator sequence of the ribosomal RNA (rrn) operons. This Synechococcus elongatus (strain ATCC 33912 / PCC 7942 / FACHB-805) (Anacystis nidulans R2) protein is Transcription antitermination protein NusB.